Consider the following 351-residue polypeptide: Phosphoribosylformylglycinamidine cyclo-ligase (351 aa).

Belongs to the AIR synthase family.

The protein localises to the cytoplasm. It carries out the reaction 2-formamido-N(1)-(5-O-phospho-beta-D-ribosyl)acetamidine + ATP = 5-amino-1-(5-phospho-beta-D-ribosyl)imidazole + ADP + phosphate + H(+). The protein operates within purine metabolism; IMP biosynthesis via de novo pathway; 5-amino-1-(5-phospho-D-ribosyl)imidazole from N(2)-formyl-N(1)-(5-phospho-D-ribosyl)glycinamide: step 2/2. In Idiomarina loihiensis (strain ATCC BAA-735 / DSM 15497 / L2-TR), this protein is Phosphoribosylformylglycinamidine cyclo-ligase.